The primary structure comprises 97 residues: UPF0125 protein plu3376 (97 aa).

The protein belongs to the UPF0125 (RnfH) family.

The polypeptide is UPF0125 protein plu3376 (Photorhabdus laumondii subsp. laumondii (strain DSM 15139 / CIP 105565 / TT01) (Photorhabdus luminescens subsp. laumondii)).